We begin with the raw amino-acid sequence, 535 residues long: Probable cytochrome P450 12b2, mitochondrial (535 aa).

Residue Cys-479 coordinates heme.

This sequence belongs to the cytochrome P450 family. The cofactor is heme.

The protein localises to the mitochondrion membrane. This is Probable cytochrome P450 12b2, mitochondrial (Cyp12b2) from Drosophila melanogaster (Fruit fly).